The following is a 203-amino-acid chain: Large ribosomal subunit protein bL25 (203 aa).

The tract at residues Glu-182–Ser-203 is disordered.

It belongs to the bacterial ribosomal protein bL25 family. CTC subfamily. As to quaternary structure, part of the 50S ribosomal subunit; part of the 5S rRNA/L5/L18/L25 subcomplex. Contacts the 5S rRNA. Binds to the 5S rRNA independently of L5 and L18.

This is one of the proteins that binds to the 5S RNA in the ribosome where it forms part of the central protuberance. The chain is Large ribosomal subunit protein bL25 from Caldicellulosiruptor saccharolyticus (strain ATCC 43494 / DSM 8903 / Tp8T 6331).